The primary structure comprises 408 residues: Glutaryl-CoA dehydrogenase, mitochondrial (408 aa).

The transit peptide at 1–13 (KGGKTQGRSAKSS) directs the protein to the mitochondrion. Substrate-binding positions include 107–108 (RS) and serine 156. FAD is bound by residues 147 to 156 (FGLTEPNHGS), serine 156, and 182 to 184 (WIT). Residue lysine 210 is modified to N6-acetyllysine. 257–264 (FGCLNNAR) is a binding site for substrate. Residues arginine 289, glutamine 300, and 357 to 361 (DMLGG) contribute to the FAD site. Catalysis depends on glutamate 384, which acts as the Proton acceptor. Residue glycine 385 coordinates substrate. Residues threonine 386, 386 to 388 (THD), and phenylalanine 404 each bind FAD.

It belongs to the acyl-CoA dehydrogenase family. As to quaternary structure, homotetramer. FAD is required as a cofactor.

The protein localises to the mitochondrion matrix. It carries out the reaction glutaryl-CoA + oxidized [electron-transfer flavoprotein] + 2 H(+) = (2E)-butenoyl-CoA + reduced [electron-transfer flavoprotein] + CO2. It participates in amino-acid metabolism; lysine degradation. The protein operates within amino-acid metabolism; tryptophan metabolism. Catalyzes the oxidative decarboxylation of glutaryl-CoA to crotonyl-CoA and CO(2) in the degradative pathway of L-lysine, L-hydroxylysine, and L-tryptophan metabolism. It uses electron transfer flavoprotein as its electron acceptor. This chain is Glutaryl-CoA dehydrogenase, mitochondrial (GCDH), found in Sus scrofa (Pig).